A 142-amino-acid chain; its full sequence is 3-hydroxyacyl-[acyl-carrier-protein] dehydratase FabZ (142 aa).

H47 is a catalytic residue.

The protein belongs to the thioester dehydratase family. FabZ subfamily.

The protein localises to the cytoplasm. The enzyme catalyses a (3R)-hydroxyacyl-[ACP] = a (2E)-enoyl-[ACP] + H2O. Functionally, involved in unsaturated fatty acids biosynthesis. Catalyzes the dehydration of short chain beta-hydroxyacyl-ACPs and long chain saturated and unsaturated beta-hydroxyacyl-ACPs. This is 3-hydroxyacyl-[acyl-carrier-protein] dehydratase FabZ from Coxiella burnetii (strain RSA 331 / Henzerling II).